The chain runs to 197 residues: Protein GrpE (197 aa).

Residues 1 to 39 (MSSKEQKTPEGQAPEEIIMDQHEEIEAVEPEASAEQVDP) are disordered.

It belongs to the GrpE family. In terms of assembly, homodimer.

Its subcellular location is the cytoplasm. Participates actively in the response to hyperosmotic and heat shock by preventing the aggregation of stress-denatured proteins, in association with DnaK and GrpE. It is the nucleotide exchange factor for DnaK and may function as a thermosensor. Unfolded proteins bind initially to DnaJ; upon interaction with the DnaJ-bound protein, DnaK hydrolyzes its bound ATP, resulting in the formation of a stable complex. GrpE releases ADP from DnaK; ATP binding to DnaK triggers the release of the substrate protein, thus completing the reaction cycle. Several rounds of ATP-dependent interactions between DnaJ, DnaK and GrpE are required for fully efficient folding. This is Protein GrpE from Escherichia coli O45:K1 (strain S88 / ExPEC).